The sequence spans 687 residues: DNA ligase (687 aa).

Residues Asp34–Asp38, Ser83–Leu84, and Glu117 each bind NAD(+). Catalysis depends on Lys119, which acts as the N6-AMP-lysine intermediate. NAD(+) is bound by residues Arg140, Glu182, Lys298, and Lys322. 4 residues coordinate Zn(2+): Cys416, Cys419, Cys434, and Cys439. The 79-residue stretch at Glu609 to Glu687 folds into the BRCT domain.

Belongs to the NAD-dependent DNA ligase family. LigA subfamily. Requires Mg(2+) as cofactor. It depends on Mn(2+) as a cofactor.

It carries out the reaction NAD(+) + (deoxyribonucleotide)n-3'-hydroxyl + 5'-phospho-(deoxyribonucleotide)m = (deoxyribonucleotide)n+m + AMP + beta-nicotinamide D-nucleotide.. DNA ligase that catalyzes the formation of phosphodiester linkages between 5'-phosphoryl and 3'-hydroxyl groups in double-stranded DNA using NAD as a coenzyme and as the energy source for the reaction. It is essential for DNA replication and repair of damaged DNA. This is DNA ligase from Anaeromyxobacter dehalogenans (strain 2CP-1 / ATCC BAA-258).